The primary structure comprises 1273 residues: MNNRPIPRNQASSSLGRNDLKPGLFGRSSFRVQHYSGTNGISPIGSSPRTKISPRYSFASSFATSESSLRESSYFDERPPVQDTGVPKSSGLYYSRASPKELSSIDRINDSSFNGIVCAGKTHLGLYKFSPQDKSIDCMHDFVSAGNDGNRGSNVQMGLGKRSKRTKLSTIADVKAGFHNHKNYVAICSNSTVLSIYDINKTGSIDNPLVTNCSQHVRSVNSFDFNMVQTNLIISGGQDSCIKIWDLRSSRSRTLSRADVNINTASDSIRDVKWMPHPTACRSASQNDLRSGVGGAAGYKFASIHDSGLLLKFDLRQPNQVEKRINAHSGPGLCLNWHPYQDYISTGGRDGKCCLWYVGDGKPGTDFLQAGNTSVNTPHSMTSNLPTNLSVVPDMTINCGFPVTKLKVRPCYEKNVLNSLVSMSSMAEDFGVSIYSLARKYIPKYNLSTSSASLGFVWWDDNLIFNIDKDNRINGWYLDREPTVLDNMPKIVTRWRDIEGNGLLFIDQDRGGYQVNDEVPANIEESKKPPNQRVSINSLSGTAGGGNSGGGSNSGMIGSIKKGISQTGLTSFAGERPALSKTGLNFSNKSLATQSMNNSHSNSFSSYAGAGPGPLNEVADYSGIESPFLMTIDLPYILNNMRVSQLPPERKSLYSPEVQAIRESPVKVFKFLAKELEFSYMQEGRSGEMKNATQLSNVNEDTTKKDLMVKFGISEKSTWTALVNKKNEAVEAISKKSVSTKEGSESLIESDGESSAKSHESDDNSSDADKKENAKDGTMHVQEKIDILLELIPICGHNASVYSYIDDLPNFKIWILIRDSLLWDLERLSVEYPDEKLPETQSTDQIGQPITMGNDDSLASDTRSYMTSDLNYFVEEHPRALRSDSDEPKDHKKPLSGLKSQLTKIQETEASIDDSLNPPKMLKKPDNPIKQEQIGSRLNDDSDSAVLEDDDNEEKSDFDTQIKGIPITNKRQPRQSFIDTYMGGLKSPIGSSNANNEFFMGRVGHSLGHSSPGSKGSPMASLNNGEFTYPGFKRMSSRNDRRSSGSLFLSPLKRRESSTAEFFNKSPMRPLSPVAPVSSFKSNPTEFLPPWNTRRLLKQIFKQAVEMGNILLVVNILFLFQNLYQLTSTEVLKNTLAQFIKILHKHELFELSAAILKCSPWEVVINADGGQSLVPIFCDKCGKLITNEPSKEKFTLEAQEKGNSMPLQRFGYWYCDSCKKPNTLCVFCERPIKTLAIGLLECGHEGHFQCLQSWFLDEGMAECPGGCMNQIRL.

Over residues 1 to 16 (MNNRPIPRNQASSSLG) the composition is skewed to polar residues. Disordered regions lie at residues 1–20 (MNNR…RNDL) and 69–93 (LRES…SGLY). 5 WD repeats span residues 119–164 (AGKT…KRSK), 166–207 (TKLS…SIDN), 215–255 (QHVR…SRTL), 327–366 (AHSG…PGTD), and 448–486 (STSS…TVLD). The segment at 521 to 559 (ANIEESKKPPNQRVSINSLSGTAGGGNSGGGSNSGMIGS) is disordered. Residues 542-553 (TAGGGNSGGGSN) are compositionally biased toward gly residues. Residues 639-679 (NNMRVSQLPPERKSLYSPEVQAIRESPVKVFKFLAKELEFS) form a WD 6 repeat. The disordered stretch occupies residues 741–777 (KEGSESLIESDGESSAKSHESDDNSSDADKKENAKDG). Over residues 754-777 (SSAKSHESDDNSSDADKKENAKDG) the composition is skewed to basic and acidic residues. The WD 7 repeat unit spans residues 784 to 824 (KIDILLELIPICGHNASVYSYIDDLPNFKIWILIRDSLLWD). Polar residues predominate over residues 839 to 848 (ETQSTDQIGQ). 2 disordered regions span residues 839–861 (ETQS…LASD) and 880–971 (ALRS…TNKR). The span at 880-890 (ALRSDSDEPKD) shows a compositional bias: basic and acidic residues. Positions 898–909 (LKSQLTKIQETE) are enriched in polar residues. The span at 941–954 (DSDSAVLEDDDNEE) shows a compositional bias: acidic residues. The WD 8 repeat unit spans residues 1058-1101 (STAEFFNKSPMRPLSPVAPVSSFKSNPTEFLPPWNTRRLLKQIF). An RING-type; degenerate zinc finger spans residues 1225-1267 (CVFCERPIKTLAIGLLECGHEGHFQCLQSWFLDEGMAECPGGC).

The protein belongs to the WD repeat RTC1 family.

Its subcellular location is the vacuole. Its function is as follows. May be involved in a process influencing telomere capping. This Zygosaccharomyces rouxii (strain ATCC 2623 / CBS 732 / NBRC 1130 / NCYC 568 / NRRL Y-229) protein is Restriction of telomere capping protein 1 (RTC1).